The primary structure comprises 542 residues: NXPE family member 4 (542 aa).

A signal peptide spans 1-26 (MKMMASRKSLWVLLFIVIFWISFTVF). 4 N-linked (GlcNAc...) asparagine glycosylation sites follow: Asn-91, Asn-92, Asn-159, and Asn-223.

The protein belongs to the NXPE family.

Its subcellular location is the secreted. The protein is NXPE family member 4 (Nxpe4) of Rattus norvegicus (Rat).